Reading from the N-terminus, the 470-residue chain is Cysteine--tRNA ligase (470 aa).

Cys29 is a binding site for Zn(2+). The 'HIGH' region motif lies at 31 to 41 (PTVYNYAHIGN). 3 residues coordinate Zn(2+): Cys211, His236, and Glu240. The short motif at 273-277 (KMSKS) is the 'KMSKS' region element. Residue Lys276 coordinates ATP.

This sequence belongs to the class-I aminoacyl-tRNA synthetase family. As to quaternary structure, monomer. Zn(2+) serves as cofactor.

It is found in the cytoplasm. The enzyme catalyses tRNA(Cys) + L-cysteine + ATP = L-cysteinyl-tRNA(Cys) + AMP + diphosphate. The chain is Cysteine--tRNA ligase from Phenylobacterium zucineum (strain HLK1).